A 461-amino-acid polypeptide reads, in one-letter code: MTLPGGPTGMARPGGARPCSPGLERAPRRSVGELRLLFEARCAAVAAAAAAGEPRARGAKRRGGQVPNGLPRAPPAPVIPQLTVTAEEPDVPPTSPGPPERERDCLPAAGSSHLQQPRRLSTSSVSSTGSSSLLEDSEDDLLSDSESRSRGNVQLEAGEDVGQKNHWQKIRTMVNLPVISPFKKRYAWVQLAGHTGSFKAAGTSGLILKRCSEPERYCLARLMADALRGCVPAFHGVVERDGESYLQLQDLLDGFDGPCVLDCKMGVRTYLEEELTKARERPKLRKDMYKKMLAVDPEAPTEEEHAQRAVTKPRYMQWREGISSSTTLGFRIEGIKKADGSCSTDFKTTRSREQVLRVFEEFVQGDEEVLRRYLNRLQQIRDTLEVSEFFRRHEVIGSSLLFVHDHCHRAGVWLIDFGKTTPLPDGQILDHRRPWEEGNREDGYLLGLDNLIGILASLAER.

Residues 1 to 29 (MTLPGGPTGMARPGGARPCSPGLERAPRR) form a disordered region. Residues 1–133 (MTLPGGPTGM…SVSSTGSSSL (133 aa)) form a required for cytoskeleton location region. 3 positions are modified to omega-N-methylarginine: arginine 35, arginine 55, and arginine 62. Residues 49 to 160 (AAAGEPRARG…GNVQLEAGED (112 aa)) are disordered. Low complexity predominate over residues 118 to 134 (RRLSTSSVSSTGSSSLL). A phosphoserine mark is found at serine 137 and serine 197. Residues serine 197, lysine 209, 249–251 (QDL), and aspartate 262 each bind ATP. Substrate-binding residues include lysine 264 and arginine 285. The interval 287 to 295 (DMYKKMLAV) is calmodulin-binding. Residue 312–319 (KPRYMQWR) participates in substrate binding. Positions 336 and 416 each coordinate ATP. Lysine 419 provides a ligand contact to substrate.

This sequence belongs to the inositol phosphokinase (IPK) family. In terms of tissue distribution, expressed in brain.

Its subcellular location is the cytoplasm. The protein resides in the cytoskeleton. The catalysed reaction is 1D-myo-inositol 1,4,5-trisphosphate + ATP = 1D-myo-inositol 1,3,4,5-tetrakisphosphate + ADP + H(+). Its activity is regulated as follows. Activated by calcium/calmodulin. Functionally, catalyzes the phosphorylation of 1D-myo-inositol 1,4,5-trisphosphate (InsP3) into 1D-myo-inositol 1,3,4,5-tetrakisphosphate and participates to the regulation of calcium homeostasis. This is Inositol-trisphosphate 3-kinase A from Homo sapiens (Human).